Consider the following 122-residue polypeptide: Large ribosomal subunit protein uL22 (122 aa).

The tract at residues V102–K122 is disordered.

The protein belongs to the universal ribosomal protein uL22 family. In terms of assembly, part of the 50S ribosomal subunit.

Functionally, this protein binds specifically to 23S rRNA; its binding is stimulated by other ribosomal proteins, e.g. L4, L17, and L20. It is important during the early stages of 50S assembly. It makes multiple contacts with different domains of the 23S rRNA in the assembled 50S subunit and ribosome. Its function is as follows. The globular domain of the protein is located near the polypeptide exit tunnel on the outside of the subunit, while an extended beta-hairpin is found that lines the wall of the exit tunnel in the center of the 70S ribosome. This Helicobacter pylori (strain G27) protein is Large ribosomal subunit protein uL22.